The chain runs to 106 residues: uncharacterized protein (106 aa).

A disordered region spans residues 1 to 23 (MASGAPPLTQKTPSHARRKERRR). A compositionally biased stretch (basic residues) spans 14-23 (SHARRKERRR).

This is an uncharacterized protein from Treponema pallidum (strain Nichols).